Consider the following 201-residue polypeptide: Protein GrpE (201 aa).

Belongs to the GrpE family. In terms of assembly, homodimer.

The protein resides in the cytoplasm. In terms of biological role, participates actively in the response to hyperosmotic and heat shock by preventing the aggregation of stress-denatured proteins, in association with DnaK and GrpE. It is the nucleotide exchange factor for DnaK and may function as a thermosensor. Unfolded proteins bind initially to DnaJ; upon interaction with the DnaJ-bound protein, DnaK hydrolyzes its bound ATP, resulting in the formation of a stable complex. GrpE releases ADP from DnaK; ATP binding to DnaK triggers the release of the substrate protein, thus completing the reaction cycle. Several rounds of ATP-dependent interactions between DnaJ, DnaK and GrpE are required for fully efficient folding. The protein is Protein GrpE of Shewanella denitrificans (strain OS217 / ATCC BAA-1090 / DSM 15013).